Consider the following 2197-residue polypeptide: Non-reducing polyketide synthase Preu6 (2197 aa).

The interval 14-253 (FFCPQSRAPP…HNPENAELAK (240 aa)) is N-terminal acylcarrier protein transacylase domain (SAT). Residues 375-797 (DDAIAITGAS…GSNAAVICVE (423 aa)) form the Ketosynthase family 3 (KS3) domain. Active-site for beta-ketoacyl synthase activity residues include Cys-546, His-681, and His-720. Residues 901–1198 (LVFSGQNTNA…SKPDSQVFQS (298 aa)) are malonyl-CoA:ACP transacylase (MAT) domain. The For acyl/malonyl transferase activity role is filled by Ser-988. Positions 1258 to 1282 (ATEASQASTTSDTIQSTPTQTVQSP) are disordered. The span at 1260–1281 (EASQASTTSDTIQSTPTQTVQS) shows a compositional bias: polar residues. The tract at residues 1276 to 1403 (TQTVQSPPKL…GRVILTESSV (128 aa)) is N-terminal hotdog fold. Residues 1276–1576 (TQTVQSPPKL…FNKMEISKLA (301 aa)) form the PKS/mFAS DH domain. A product template (PT) domain region spans residues 1284–1575 (KLISRLASLQ…RFNKMEISKL (292 aa)). Catalysis depends on His-1310, which acts as the Proton acceptor; for dehydratase activity. The tract at residues 1424–1576 (AEKLMSSRAY…FNKMEISKLA (153 aa)) is C-terminal hotdog fold. Asp-1487 acts as the Proton donor; for dehydratase activity in catalysis. Polar residues predominate over residues 1581-1591 (SVNASSPTGGR). Residues 1581–1614 (SVNASSPTGGRTQPPAAPKTQAQPMASRPSPTPL) form a disordered region. 2 consecutive Carrier domains span residues 1639–1719 (NDIG…SQKM) and 1748–1824 (NSIT…ATPP). An O-(pantetheine 4'-phosphoryl)serine mark is found at Ser-1673 and Ser-1782. Residues 1817–1841 (LGASATPPSTTGSSTPGDISTAATT) are disordered. Residues 1818-1833 (GASATPPSTTGSSTPG) are compositionally biased toward low complexity. Residues 1870 to 2197 (DSYQVKTVEY…PGLDFLIQNA (328 aa)) form a thioesterase (TE) domain region. Active-site for thioesterase activity residues include Ser-1990 and Asp-2137.

Pantetheine 4'-phosphate serves as cofactor.

It catalyses the reaction 6 malonyl-CoA + 2 acetyl-CoA + 5 H(+) = o-orsellinate depside + 6 CO2 + 8 CoA + H2O. Its function is as follows. Non-reducing polyketide synthase; part of a gene cluster that mediates the biosynthesis of a yet unidentified natural product. The first step in the pathway is performed by Preu6 that condenses 2 acetyl-CoA starter units with 6 malonyl-CoA units to produce lecanoric acid (LA), also known as orsellinate depside, an intermediate that has significant antifungal activity against the plant pathogen Botryosphaeria berengeriana. The biosynthesis probably occurs via the formation of 2 orsellinate intermediates fused together by the C-terminal thioesterase (TE) domain that finally releases lecanoric acid. The chain is Non-reducing polyketide synthase Preu6 from Preussia isomera (Coprophilous fungus).